The following is a 207-amino-acid chain: uncharacterized protein (207 aa).

Disordered stretches follow at residues 1 to 81 (MNPT…GNTR) and 140 to 169 (TSQS…PPKK). Positions 21 to 40 (FEQTNSSASLTQKNSSSETE) are enriched in polar residues. Residues 58–70 (PTKRGSGRGRGRS) show a composition bias toward basic residues. Over residues 140–152 (TSQSIDAQPTPSQ) the composition is skewed to polar residues. Residues 156–165 (AHHEPHEKRG) are compositionally biased toward basic and acidic residues.

The protein resides in the nucleus. It localises to the nucleolus. This is an uncharacterized protein from Schizosaccharomyces pombe (strain 972 / ATCC 24843) (Fission yeast).